Consider the following 503-residue polypeptide: Discoidin, CUB and LCCL domain-containing protein 1 (503 aa).

Residues methionine 1 to alanine 25 form the signal peptide. The Extracellular segment spans residues glutamate 26–threonine 250. 4 disulfides stabilise this stretch: cysteine 32–cysteine 59, cysteine 85–cysteine 103, cysteine 149–cysteine 165, and cysteine 169–cysteine 191. One can recognise a CUB domain in the interval cysteine 32–serine 141. The N-linked (GlcNAc...) asparagine glycan is linked to asparagine 55. The region spanning histidine 143 to phenylalanine 239 is the LCCL domain. The N-linked (GlcNAc...) asparagine glycan is linked to asparagine 247. The chain crosses the membrane as a helical span at residues valine 251–isoleucine 271. Topologically, residues cysteine 272–leucine 503 are cytoplasmic. At serine 305 the chain carries Phosphoserine. Residue threonine 406 is modified to Phosphothreonine. The segment at glutamine 410 to leucine 503 is disordered. Residues leucine 494–leucine 503 are compositionally biased toward polar residues.

The protein resides in the membrane. This is Discoidin, CUB and LCCL domain-containing protein 1 (Dcbld1) from Mus musculus (Mouse).